A 96-amino-acid chain; its full sequence is UPF0235 protein VP2619 (96 aa).

This sequence belongs to the UPF0235 family.

This is UPF0235 protein VP2619 from Vibrio parahaemolyticus serotype O3:K6 (strain RIMD 2210633).